Consider the following 1093-residue polypeptide: Electroneutral sodium bicarbonate exchanger 1 (1093 aa).

Disordered regions lie at residues 1–25 (MPAAGSNEPDGVLSYQRPDEEAVVD) and 55–95 (PLGR…HDTP). The Extracellular portion of the chain corresponds to 1–478 (MPAAGSNEPD…DYRDALSLQC (478 aa)). Residues 59-77 (QSHRHHRTHGQKHRRRGRG) show a composition bias toward basic residues. Zn(2+) contacts are provided by Phe167 and Leu169. Positions 340 to 344 (LFILL) match the VTVLP; mediates dimerization motif. The helical transmembrane segment at 479–499 (LASFLFLYCACMSPVITFGGL) threads the bilayer. Topologically, residues 500 to 523 (LGEATEGRISAIESLFGASMTGIA) are cytoplasmic. A helical transmembrane segment spans residues 524–544 (YSLFAGQALTILGSTGPVLVF). Residues 545–565 (EKILFKFCKDYALSYLSLRAC) lie on the Extracellular side of the membrane. A helical membrane pass occupies residues 566–586 (IGLWTAFLCIVLVATDASSLV). The Cytoplasmic portion of the chain corresponds to 587–595 (CYITRFTEE). A helical transmembrane segment spans residues 596–616 (AFASLICIIFIYEAIEKLIHL). The Extracellular portion of the chain corresponds to 617–687 (AETYPIHMHS…EFMGSACGHH (71 aa)). 2 disulfide bridges follow: Cys636-Cys684 and Cys638-Cys672. Asn646 is a glycosylation site (N-linked (GlcNAc) asparagine). A helical membrane pass occupies residues 688 to 708 (GPYTPDVLFWSCILFFTTFIL). The Cytoplasmic segment spans residues 709-731 (SSTLKTFKTSRYFPTRVRSMVSD). Residues 732-752 (FAVFLTIFTMVIIDFLIGVPS) traverse the membrane as a helical segment. Residues 753–778 (PKLQVPSVFKPTRDDRGWIINPIGPN) lie on the Extracellular side of the membrane. A helical transmembrane segment spans residues 779 to 799 (PWWTVIAAIIPALLCTILIFM). Over 800-824 (DQQITAVIINRKEHKLKKGCGYHLD) the chain is Cytoplasmic. Residues 825-845 (LLMVAIMLGVCSIMGLPWFVA) traverse the membrane as a helical segment. Residues 846–881 (ATVLSITHVNSLKLESECSAPGEQPKFLGIREQRVT) are Extracellular-facing. A helical membrane pass occupies residues 882 to 902 (GLMIFVLMGCSVFMTAILKFI). Residues 903 to 904 (PM) are Cytoplasmic-facing. Residues 905-925 (PVLYGVFLYMGVSSLQGIQFF) form a helical membrane-spanning segment. Residues 926–962 (DRLKLFGMPAKHQPDFIYLRHVPLRKVHLFTLIQLTC) lie on the Extracellular side of the membrane. The chain crosses the membrane as a helical span at residues 963–983 (LVLLWVIKASPAAIVFPMMVL). At 984–1093 (ALVFVRKVMD…GNAKEKSLFN (110 aa)) the chain is on the cytoplasmic side. Residues 1010-1036 (ESKKKKLDDAKKKAKEEEEAEKMLEIG) adopt a coiled-coil conformation.

This sequence belongs to the anion exchanger (TC 2.A.31) family. As to quaternary structure, homodimer. In terms of tissue distribution, expressed in the pyramidal cells of the hippocampus (at protein level). Highly expressed in all major regions of the brain, spinal column and in testis, and moderate levels in trachea, thyroid and medulla region of kidney. Low expression levels observed in pancreas and kidney cortex. As to expression, expressed in the brain. Expressed in the brain, heart and kidney.

The protein resides in the apical cell membrane. It localises to the basolateral cell membrane. Its subcellular location is the cytoplasmic vesicle. The protein localises to the secretory vesicle. It is found in the synaptic vesicle membrane. The protein resides in the cell membrane. The enzyme catalyses 2 hydrogencarbonate(out) + chloride(in) + Na(+)(out) = 2 hydrogencarbonate(in) + chloride(out) + Na(+)(in). Activity is inhibited by 4,4'-Di-isothiocyanatostilbene-2,2'-disulfonic acid (DIDS - an inhibitor of several anion channels and transporters). With respect to regulation, activity is inhibited by 4,4'-Di-isothiocyanatostilbene-2,2'-disulfonic acid (DIDS - an inhibitor of several anion channels and transporters). Zinc-binding negatively regulates its activity. Functionally, mediates electroneutral sodium- and carbonate-dependent chloride-HCO3(-) exchange with a Na(+):HCO3(-) stoichiometry of 2:1. Plays a major role in pH regulation in neurons. Mediates sodium reabsorption in the renal cortical collecting ducts. This Homo sapiens (Human) protein is Electroneutral sodium bicarbonate exchanger 1.